We begin with the raw amino-acid sequence, 190 residues long: Inosine triphosphate pyrophosphatase (190 aa).

8 to 13 lines the ITP pocket; the sequence is TGNANK. Glu-37 serves as a coordination point for Mg(2+). ITP contacts are provided by residues Lys-49, 65–66, Lys-82, 140–143, Lys-163, and 168–169; these read DT, FGWD, and HR.

This sequence belongs to the HAM1 NTPase family. Homodimer. Mg(2+) is required as a cofactor. The cofactor is Mn(2+).

It is found in the cytoplasm. The protein resides in the nucleus. It catalyses the reaction ITP + H2O = IMP + diphosphate + H(+). It carries out the reaction dITP + H2O = dIMP + diphosphate + H(+). The catalysed reaction is XTP + H2O = XMP + diphosphate + H(+). Pyrophosphatase that hydrolyzes non-canonical purine nucleotides such as inosine triphosphate (ITP), deoxyinosine triphosphate (dITP) or xanthosine 5'-triphosphate (XTP) to their respective monophosphate derivatives. The enzyme does not distinguish between the deoxy- and ribose forms. Probably excludes non-canonical purines from RNA and DNA precursor pools, thus preventing their incorporation into RNA and DNA and avoiding chromosomal lesions. This chain is Inosine triphosphate pyrophosphatase, found in Batrachochytrium dendrobatidis (strain JAM81 / FGSC 10211) (Frog chytrid fungus).